The primary structure comprises 197 residues: Small ribosomal subunit protein eS1 (197 aa).

Belongs to the eukaryotic ribosomal protein eS1 family.

The chain is Small ribosomal subunit protein eS1 from Methanoculleus marisnigri (strain ATCC 35101 / DSM 1498 / JR1).